The chain runs to 370 residues: Glutamine synthetase (370 aa).

In terms of domain architecture, GS beta-grasp spans V23–G102. The disordered stretch occupies residues C40–H69. In terms of domain architecture, GS catalytic spans H109–D370.

The protein belongs to the glutamine synthetase family. As to quaternary structure, homooctamer.

Its subcellular location is the cytoplasm. The enzyme catalyses L-glutamate + NH4(+) + ATP = L-glutamine + ADP + phosphate + H(+). In Debaryomyces hansenii (strain ATCC 36239 / CBS 767 / BCRC 21394 / JCM 1990 / NBRC 0083 / IGC 2968) (Yeast), this protein is Glutamine synthetase (GLN1).